A 529-amino-acid polypeptide reads, in one-letter code: Pre-rRNA-processing protein pro-1 (529 aa).

WD repeat units lie at residues 136–175 (AHYQNITKIVISDDDSMIFTASKDGAVHGYLVTDLVSADR) and 287–326 (GHSDEISRLAINTDGTLLASGDASGKYCIWEISSHQCLKV). The stretch at 416–518 (ARNEAAKAEK…LKEINKQMYE (103 aa)) forms a coiled coil. Residues 436-470 (TLGDDEDDAPEVGNQRRKSGKKNKKNRKNQKKNDF) form a disordered region. The span at 450–465 (QRRKSGKKNKKNRKNQ) shows a compositional bias: basic residues.

The protein belongs to the WD repeat IPI3/WDR18 family. In terms of assembly, component of the PELP1 complex, composed of at least PELP1, TEX10 and WDR18. The complex interacts with pre-60S ribosome particles.

It is found in the nucleus. The protein localises to the nucleolus. The protein resides in the nucleoplasm. Functionally, component of the PELP1 complex involved in the nucleolar steps of 28S rRNA maturation and the subsequent nucleoplasmic transit of the pre-60S ribosomal subunit. Required for processing ITS2 sequences from rRNA intermediates during 26S rRNA maturation. Required in the soma to promote normal proliferation and prevent germline tumor formation. The chain is Pre-rRNA-processing protein pro-1 from Caenorhabditis elegans.